The primary structure comprises 288 residues: Solute carrier family 25 member 47-B (288 aa).

Solcar repeat units follow at residues 1–83 (MHLA…ILQF), 99–191 (AHIF…ICEI), and 199–286 (PGWP…VVRL). 6 consecutive transmembrane segments (helical) span residues 3–23 (LADF…GYPL), 58–75 (GMSM…LVFG), 101–121 (IFLA…PADI), 175–195 (GPSF…LTTE), 199–219 (PGWP…WAVG), and 257–277 (VLFR…MSVF).

Belongs to the mitochondrial carrier (TC 2.A.29) family.

It is found in the mitochondrion inner membrane. This chain is Solute carrier family 25 member 47-B (slc25a47b), found in Danio rerio (Zebrafish).